Reading from the N-terminus, the 267-residue chain is tRNA pseudouridine synthase A (267 aa).

D51 serves as the catalytic Nucleophile. Y109 serves as a coordination point for substrate.

It belongs to the tRNA pseudouridine synthase TruA family. As to quaternary structure, homodimer.

It carries out the reaction uridine(38/39/40) in tRNA = pseudouridine(38/39/40) in tRNA. Formation of pseudouridine at positions 38, 39 and 40 in the anticodon stem and loop of transfer RNAs. In Staphylococcus carnosus (strain TM300), this protein is tRNA pseudouridine synthase A.